The primary structure comprises 565 residues: Urocanate hydratase (565 aa).

NAD(+)-binding positions include glycine 61–glycine 62, glutamine 139, glycine 185–glycine 187, glutamate 205, arginine 210, asparagine 251–alanine 252, glutamine 272–histidine 276, tyrosine 282–leucine 283, and tyrosine 331. Cysteine 419 is a catalytic residue. Positions leucine 453–serine 472 are disordered. Positions arginine 463 to serine 472 are enriched in basic and acidic residues. Glycine 501 contacts NAD(+).

It belongs to the urocanase family. Requires NAD(+) as cofactor.

The protein localises to the cytoplasm. It catalyses the reaction 4-imidazolone-5-propanoate = trans-urocanate + H2O. It participates in amino-acid degradation; L-histidine degradation into L-glutamate; N-formimidoyl-L-glutamate from L-histidine: step 2/3. In terms of biological role, catalyzes the conversion of urocanate to 4-imidazolone-5-propionate. The sequence is that of Urocanate hydratase from Pseudomonas syringae.